A 1212-amino-acid chain; its full sequence is DNA-directed RNA polymerase subunit beta' (1212 aa).

The Zn(2+) site is built by C60, C62, C75, and C78. Mg(2+)-binding residues include D450, D452, and D454. Zn(2+)-binding residues include C819, C893, C900, and C903.

The protein belongs to the RNA polymerase beta' chain family. The RNAP catalytic core consists of 2 alpha, 1 beta, 1 beta' and 1 omega subunit. When a sigma factor is associated with the core the holoenzyme is formed, which can initiate transcription. Requires Mg(2+) as cofactor. Zn(2+) is required as a cofactor.

The enzyme catalyses RNA(n) + a ribonucleoside 5'-triphosphate = RNA(n+1) + diphosphate. DNA-dependent RNA polymerase catalyzes the transcription of DNA into RNA using the four ribonucleoside triphosphates as substrates. The protein is DNA-directed RNA polymerase subunit beta' of Streptococcus uberis (strain ATCC BAA-854 / 0140J).